The primary structure comprises 495 residues: MAEPSLRTASPGGSAASDDHEFEPSADMLVHEFDDEQTLEEEEMLEGEVNFTSEIEHLERESEMPIDELLRLYGYGSTVPLPGEEEEDEEDMDNDCNSGCSGEIKDEAIKDSSGQEDETQSSNDDPTPSFTCRDVREVIRPRRCKYFDTNHEIEEESEDDEDYVPSEDWKKEIMVGSMFQAEIPVGICKYRETEKVYENDDQLLWDPEYVMEERVIDFLNEASRRTCEERGLDAIPEGSHIKDNEQALYELVKCNFDTEEALRRLRFNVKAAREELSVWTEEECRNFEQGLKAYGKDFHLIQANKVRTRSVGECVAFYYMWKKSERYDFFAQQTRFGKKKYNLHPGVTDYMDRLLDESESATSSRAPSPPPTTSNSNTSQSEKEDCTASNNTQNGVSVNGPCAITAYKDEAKQGVHLNGPTISSSDPSSNETDTNGYNRENVTDDSRFSHTSGKTDTNPDDTNERPIKRQRMDSPGKESTGSSEFSQEVFSHGEV.

Disordered stretches follow at residues 1 to 25 (MAEPSLRTASPGGSAASDDHEFEPS) and 76 to 131 (GSTV…PSFT). The span at 83–94 (GEEEEDEEDMDN) shows a compositional bias: acidic residues. Over residues 120–130 (QSSNDDPTPSF) the composition is skewed to polar residues. In terms of domain architecture, ELM2 spans 171–269 (KEIMVGSMFQ…EALRRLRFNV (99 aa)). Residues 274–326 (EELSVWTEEECRNFEQGLKAYGKDFHLIQANKVRTRSVGECVAFYYMWKKSER) form the SANT domain. Disordered regions lie at residues 356–397 (DESE…NGVS) and 416–495 (HLNG…HGEV). Composition is skewed to polar residues over residues 387-397 (TASNNTQNGVS) and 420-440 (PTISSSDPSSNETDTNGYNRE). Over residues 462–476 (TNERPIKRQRMDSPG) the composition is skewed to basic and acidic residues. Residues 477-489 (KESTGSSEFSQEV) are compositionally biased toward polar residues.

The protein resides in the nucleus. Functionally, transcriptional repressor regulating the expression of a number of genes. Probably functions through recruitment of histone deacetylases involved in chromatin silencing. In Xenopus laevis (African clawed frog), this protein is Mesoderm induction early response protein 1 (mier1).